The following is a 63-amino-acid chain: Venom peptide U-reduvitoxin-Pp19 (63 aa).

Positions 1–23 (MSPYSILFVVVIALCLLPESIVG) are cleaved as a signal peptide. 3 disulfide bridges follow: Cys-15-Cys-62, Cys-25-Cys-53, and Cys-30-Cys-61.

In terms of tissue distribution, hemolymph (at protein level). Also weakly expressed by the venom gland (at protein level).

The protein localises to the secreted. In terms of biological role, toxin with insecticidal activity. High doses of recombinant toxin causes impaired motor behavior of D.melanogaster, which progress slowly to paralysis and death after several hours. The polypeptide is Venom peptide U-reduvitoxin-Pp19 (Pristhesancus plagipennis (Common assassin bug)).